Here is a 70-residue protein sequence, read N- to C-terminus: Large ribosomal subunit protein eL38 (70 aa).

It belongs to the eukaryotic ribosomal protein eL38 family.

The protein is Large ribosomal subunit protein eL38 (RpL38) of Bombyx mori (Silk moth).